Consider the following 236-residue polypeptide: 7-cyano-7-deazaguanine synthase (236 aa).

12 to 22 (FSGGQDSTTCL) lines the ATP pocket. Zn(2+) is bound by residues C200, C215, C218, and C221.

Belongs to the QueC family. Zn(2+) is required as a cofactor.

The enzyme catalyses 7-carboxy-7-deazaguanine + NH4(+) + ATP = 7-cyano-7-deazaguanine + ADP + phosphate + H2O + H(+). It functions in the pathway purine metabolism; 7-cyano-7-deazaguanine biosynthesis. In terms of biological role, catalyzes the ATP-dependent conversion of 7-carboxy-7-deazaguanine (CDG) to 7-cyano-7-deazaguanine (preQ(0)). The protein is 7-cyano-7-deazaguanine synthase of Bradyrhizobium sp. (strain ORS 278).